Consider the following 353-residue polypeptide: Sesquiterpene synthase Agr8 (353 aa).

Mg(2+) is bound by residues Asp82, Asn220, Ser224, and Glu228. The DDXXD motif motif lies at 82–86 (DEYTD). Residues Arg309 and Tyr310 each contribute to the (2E,6E)-farnesyl diphosphate site.

The protein belongs to the terpene synthase family. It depends on Mg(2+) as a cofactor.

The enzyme catalyses (2E,6E)-farnesyl diphosphate = gamma-muurolene + diphosphate. It catalyses the reaction (2E,6E)-farnesyl diphosphate = alpha-selinene + diphosphate. It carries out the reaction (2E,6E)-farnesyl diphosphate = delta-cadinene + diphosphate. Terpene cyclase that catalyzes the cyclization of farnesyl diphosphate (FPP) to various sesquiterpenes, including beta-elemene, gamma-muurolene, alpha-selinene, beta-selinene, beta-cadinene, delta-cadinene and alpha-cadinol. The sequence is that of Sesquiterpene synthase Agr8 from Cyclocybe aegerita (Black poplar mushroom).